The sequence spans 78 residues: Glycophorin-E (78 aa).

An N-terminal signal peptide occupies residues 1–19; that stretch reads MYGKIIFVLLLSGIVSISA. Over 20–52 the chain is Extracellular; sequence SSTTGVAMHTSTSSSVTKSYISSQTNGITLINW. The helical transmembrane segment at 53 to 73 threads the bilayer; that stretch reads WAMARVIFEVMLVVVGMIILI. Residues 74-78 lie on the Cytoplasmic side of the membrane; that stretch reads SYCIR.

Belongs to the glycophorin-A family. In terms of processing, the N-terminal extracellular domain is heavily glycosylated on serine and threonine residues. In terms of tissue distribution, erythrocytes.

Its subcellular location is the membrane. Its function is as follows. This protein is a minor sialoglycoprotein in human erythrocyte membranes. The sequence is that of Glycophorin-E (GYPE) from Homo sapiens (Human).